A 374-amino-acid chain; its full sequence is Guanine nucleotide-binding protein subunit alpha-15 (374 aa).

In terms of domain architecture, G-alpha spans 41–374 (GELKLLLLGP…ARYLDEINLL (334 aa)). Residues 44–57 (KLLLLGPGESGKST) are G1 motif. GTP is bound by residues 49 to 56 (GPGESGKS), 183 to 189 (LRSRMPT), 208 to 212 (DVGGQ), 277 to 280 (NKTD), and Ala-346. Ser-56 is a binding site for Mg(2+). Residues 181–189 (DVLRSRMPT) are G2 motif. Arg-186 is subject to ADP-ribosylarginine; by cholera toxin. Thr-189 is a Mg(2+) binding site. The G3 motif stretch occupies residues 204-213 (LRIVDVGGQK). The segment at 273–280 (ILFLNKTD) is G4 motif. A G5 motif region spans residues 344–349 (TCATDT).

It belongs to the G-alpha family. G(q) subfamily. G proteins are composed of 3 units; alpha, beta and gamma. The alpha chain contains the guanine nucleotide binding site. Specifically expressed in hematopoietic cells. Expressed in epididymis (at protein level).

Guanine nucleotide-binding proteins (G proteins) are involved as modulators or transducers in various transmembrane signaling systems. The sequence is that of Guanine nucleotide-binding protein subunit alpha-15 (GNA15) from Homo sapiens (Human).